The sequence spans 438 residues: Ammonium transporter Rh type A (438 aa).

The Cytoplasmic segment spans residues 1 to 4 (MRFK). The chain crosses the membrane as a helical span at residues 5-25 (FPLMAISLEVAMIVLFGLFVE). Topologically, residues 26 to 61 (YETPQNASQKNASHQNASQQGNTSSSAKKDQFFQLY) are extracellular. Residues asparagine 31, asparagine 36, asparagine 41, and asparagine 47 are each glycosylated (N-linked (GlcNAc...) asparagine). A helical membrane pass occupies residues 62 to 82 (PLFQDVHVMIFVGFGFLMTFL). Topologically, residues 83–86 (KKYG) are cytoplasmic. Residues 87 to 107 (FSGVGFNLFLAALGLQWGTIM) form a helical membrane-spanning segment. Residues 108–121 (QGLLHSHGKEFHFG) lie on the Extracellular side of the membrane. The chain crosses the membrane as a helical span at residues 122 to 142 (IYNMINADFSTATVLISFGAV). Over 143–148 (LGKTSP) the chain is Cytoplasmic. The chain crosses the membrane as a helical span at residues 149–169 (IQMLIMTILEIAVFAGNEYLV). The Extracellular segment spans residues 170 to 178 (TELFEASDT). The chain crosses the membrane as a helical span at residues 179–199 (GASMTIHAFGAYFGLAVAGVL). The Cytoplasmic segment spans residues 200–218 (YRPGLRCEHPNDESVYHSD). Residues 219–239 (LFAMIGTLFLWIFWPSFNSAI) form a helical membrane-spanning segment. Over 240–249 (ADPGDHQYRA) the chain is Extracellular. Residues 250 to 270 (IVNTYMSLAACVITAYALSSL) traverse the membrane as a helical segment. Residues 271-278 (VERRGRLD) lie on the Cytoplasmic side of the membrane. Residues 279 to 296 (MVHIQNATLAGGVAVGTC) traverse the membrane as a helical segment. Residues 297–300 (ADME) are Extracellular-facing. The helical transmembrane segment at 301-321 (IPLYAAMTIGSIAGIISVLGY) threads the bilayer. Residues 322 to 342 (KFFSPLLANKLMIHDTCGVHN) lie on the Cytoplasmic side of the membrane. The chain crosses the membrane as a helical span at residues 343 to 363 (LHGLPGVFGGLASIVAISWGM). At 364–372 (STASMAMQA) the chain is on the extracellular side. A helical transmembrane segment spans residues 373 to 393 (AALGSSIGSAIVGGLLTGLIL). Residues 394–438 (KLPIWNQPPDEYCYDDSVSWKVPKFRELDNRFFQHANHNHVEHEV) are Cytoplasmic-facing.

The protein belongs to the ammonium transporter (TC 2.A.49) family. Rh subfamily. Homodimer. Heterotrimer; a RHCE monomer interacts with a RHAG homodimer. Component of the ankyrin-1 complex in the erythrocyte, composed of ANK1, RHCE, RHAG, SLC4A1, EPB42, GYPA, GYPB and AQP1. Interacts with GYPB (via the N-terminal); this interaction bridges the (RHAG)2(RHCE) heterotrimer with the SLC4A1 Band 3 I dimer complexed with GYPA. In terms of processing, glycosylated.

The protein localises to the membrane. The enzyme catalyses methylamine(out) = methylamine(in). It catalyses the reaction NH4(+)(in) = NH4(+)(out). The catalysed reaction is CO2(out) = CO2(in). Component of the ankyrin-1 complex, a multiprotein complex involved in the stability and shape of the erythrocyte membrane. Heterotrimer with RHCE (RHAG)2(RHCE), that transports ammonium and its related derivative methylammonium, in both neutral and ionic forms, across the erythrocyte membrane. The transport of NH4(+) is electrogenic and masks the NH3 transport. Also, may act as a CO2 channel. Moreover in erythrocyte, regulates RHD membrane expression and is associated with rhesus blood group antigen expression. This Mus musculus (Mouse) protein is Ammonium transporter Rh type A.